Here is a 607-residue protein sequence, read N- to C-terminus: UvrABC system protein C (607 aa).

Positions 16 to 94 (GRPGVYRMFD…IKEWRPPYNI (79 aa)) constitute a GIY-YIG domain. Residues 203–238 (NALSDELNASMEKAAMALDFERAAELRDQVALLRRV) form the UVR domain.

Belongs to the UvrC family. In terms of assembly, interacts with UvrB in an incision complex.

The protein resides in the cytoplasm. Its function is as follows. The UvrABC repair system catalyzes the recognition and processing of DNA lesions. UvrC both incises the 5' and 3' sides of the lesion. The N-terminal half is responsible for the 3' incision and the C-terminal half is responsible for the 5' incision. The sequence is that of UvrABC system protein C from Pseudomonas syringae pv. syringae (strain B728a).